Reading from the N-terminus, the 144-residue chain is Ribosome-binding factor A (144 aa).

The disordered stretch occupies residues 120–144 (DKRRMAEAGREEDEAAPDDTTEDKA). Acidic residues predominate over residues 129 to 144 (REEDEAAPDDTTEDKA).

Belongs to the RbfA family. In terms of assembly, monomer. Binds 30S ribosomal subunits, but not 50S ribosomal subunits or 70S ribosomes.

It localises to the cytoplasm. One of several proteins that assist in the late maturation steps of the functional core of the 30S ribosomal subunit. Associates with free 30S ribosomal subunits (but not with 30S subunits that are part of 70S ribosomes or polysomes). Required for efficient processing of 16S rRNA. May interact with the 5'-terminal helix region of 16S rRNA. The chain is Ribosome-binding factor A from Aeromonas salmonicida (strain A449).